We begin with the raw amino-acid sequence, 116 residues long: MYEQAIVIRNDLKMGKGKMAAQACHASIQAYLHAQKISPSAVMYWMNEGQKKVVLKVNSEKELLEIFRDVNIDGLPCSLIRDAGKTQIEPGSLTAVGIGPEKEDKISKVTKNLKLL.

Belongs to the PTH2 family.

The protein localises to the cytoplasm. It carries out the reaction an N-acyl-L-alpha-aminoacyl-tRNA + H2O = an N-acyl-L-amino acid + a tRNA + H(+). Functionally, the natural substrate for this enzyme may be peptidyl-tRNAs which drop off the ribosome during protein synthesis. This chain is Peptidyl-tRNA hydrolase, found in Methanococcus vannielii (strain ATCC 35089 / DSM 1224 / JCM 13029 / OCM 148 / SB).